The following is a 97-amino-acid chain: Large ribosomal subunit protein eL21 (97 aa).

Residues 1–24 (MQKSEGFRSKTRYKLQKHPRQKGM) are disordered. Basic residues predominate over residues 9–21 (SKTRYKLQKHPRQ).

The protein belongs to the eukaryotic ribosomal protein eL21 family.

The chain is Large ribosomal subunit protein eL21 from Methanococcus maripaludis (strain DSM 14266 / JCM 13030 / NBRC 101832 / S2 / LL).